A 145-amino-acid chain; its full sequence is GISADQAKALKDDIAVVAQNPNGCGKALFIKMFEMNPGWVEKFPAWKGKSLDEIKASDKITNHGGKVINELANWINNINSASGILKSQGTAHKGRSIGIEYFENVLPVIDATFAQQMGGAYTAAMKDALKAAWTGVIVPGMKAGY.

Residues 1-145 form the Globin domain; that stretch reads GISADQAKAL…VIVPGMKAGY (145 aa). The heme b site is built by His-63 and His-92.

The protein belongs to the globin family. In terms of assembly, monomer.

The chain is Globin-1 from Liolophura japonica (Chiton).